The following is a 482-amino-acid chain: UDP-glycosyltransferase 1 (482 aa).

The N-linked (GlcNAc...) asparagine glycan is linked to Asn243. A helical transmembrane segment spans residues 450-470 (IYLVYALVLGSAWWIGKTILG).

This sequence belongs to the glycosyltransferase 28 family.

Its subcellular location is the membrane. It carries out the reaction exophillate aglycone + UDP-alpha-D-glucose = exophillate + UDP + H(+). Its pathway is secondary metabolite biosynthesis. Its function is as follows. Acts as a depside 2-O-glucosyltransferase that catalyzes the first glycosylation step during phaeomoniecin D biosynthesis by producing the intermediate exophillic acid which is further O-galactosylated into phaeomoniecin D by the C-galactosyltransferase OGT2. In Phaeomoniella chlamydospora (Phaeoacremonium chlamydosporum), this protein is UDP-glycosyltransferase 1.